The chain runs to 761 residues: MSKVRIYEYAKANNVQSKQLIESLKSMGVEVSNHMSAIDEETLNKAKQAGKPAAAKGQGSTSNQKQNSQNQRSNQGQKQRPQNNQQNQGQKQRPQNNQQSQSQGQTKRPSQASNNQSGAAKSQAGKPNQNRGGNRPGGQGRPGSNNRRPGNNQNRRNHGNRGGKRRPQSKVNHQQMPLPEKITISGSHTVSELAAKLHREASELIKKLIGLGVMATINQELDKDTIELLAADYGVEVEEEVIVDELDIELYDREDKEEELKERPPVVTIMGHVDHGKTTLLDSIRNTKVTAGEAGGITQHIGAYQIEHSGKKITFLDTPGHAAFTTMRARGAQVTDITILVVAADDGVMPQTKEAISHAKAAEVPIIVAVNKIDKETASPDRVMQELTEFELVPEAWGGDTIFVNVSALTGEGIDELIEMILLVAEVEEFKANPDKLATGTVVEAQLDKGRGPVATLLVQSGTLNVGDAVVVGSTFGRVRALVNDVGRRVKTAGPSAPVEITGLNEVPQAGDRFQAFEDEKKARQLGEGLMARYREQNLTASSKVSLDDLFNQIQQGDVKDINVIIKADVQGSVEAMKGSLEKIDVAGVKVNIIHTGAGAITESDIILASASNAIVIGFNVRPDVNAKRVAEAENVDIRLHRVIYNAIDEIEQAMKGALDPEFEEKVIGQVEVRTTFKVSKVGTIAGSYVTEGKITRNSSVRLIRDGIVIYEGELNALKRYKDDAKEVQAGYECGITLDKFNDIKEGDMIEAYVMEEVKRA.

A disordered region spans residues 39 to 179 (DEETLNKAKQ…KVNHQQMPLP (141 aa)). The span at 45-105 (KAKQAGKPAA…NNQQSQSQGQ (61 aa)) shows a compositional bias: low complexity. A compositionally biased stretch (polar residues) spans 106-120 (TKRPSQASNNQSGAA). Residues 142–154 (PGSNNRRPGNNQN) show a composition bias toward low complexity. Over residues 155-168 (RRNHGNRGGKRRPQ) the composition is skewed to basic residues. A tr-type G domain is found at 262 to 435 (ERPPVVTIMG…EVEEFKANPD (174 aa)). Positions 271–278 (GHVDHGKT) are G1. 271–278 (GHVDHGKT) serves as a coordination point for GTP. The tract at residues 296-300 (GITQH) is G2. The tract at residues 317 to 320 (DTPG) is G3. Residues 317–321 (DTPGH) and 371–374 (NKID) contribute to the GTP site. Residues 371–374 (NKID) are G4. Positions 407-409 (SAL) are G5.

It belongs to the TRAFAC class translation factor GTPase superfamily. Classic translation factor GTPase family. IF-2 subfamily.

It is found in the cytoplasm. Functionally, one of the essential components for the initiation of protein synthesis. Protects formylmethionyl-tRNA from spontaneous hydrolysis and promotes its binding to the 30S ribosomal subunits. Also involved in the hydrolysis of GTP during the formation of the 70S ribosomal complex. The polypeptide is Translation initiation factor IF-2 (Shouchella clausii (strain KSM-K16) (Alkalihalobacillus clausii)).